The following is a 685-amino-acid chain: Beta-taxilin (685 aa).

The disordered stretch occupies residues 1–135; that stretch reads MEINHPDQLS…KEPVSNKEQK (135 aa). Positions 18–28 are enriched in polar residues; it reads GDSSSLNQNGP. Basic and acidic residues-rich tracts occupy residues 47–67 and 80–90; these read GSLHPEKGAHDVAEELSRQLE and RGKESTSETKE. Residues 98–113 show a composition bias toward acidic residues; it reads PDNEDVDYEETTEEID. Coiled coils occupy residues 138–354 and 381–470; these read KKIL…VLKE and NEVF…SEKE. Residues 465-478 show a composition bias toward basic and acidic residues; sequence KMSEKEDQVQRTSE. 2 disordered regions span residues 465–497 and 517–685; these read KMSEKEDQVQRTSEEEPEPSVSENEEVDAEEAN and EFTP…NGVD. A phosphoserine mark is found at S477, S484, and S486. Acidic residues predominate over residues 479–495; it reads EEPEPSVSENEEVDAEE. The segment covering 575 to 591 has biased composition (low complexity); sequence CEATPAPTASCTPAEAE. The segment covering 612–627 has biased composition (polar residues); sequence ANTSGQAPLSPAQGSL.

This sequence belongs to the taxilin family. Binds to the C-terminal coiled coil region of syntaxin family members STX1A, STX3A and STX4A. Has a preference for STX1A. In terms of tissue distribution, specifically expressed in skeletal muscle.

In terms of biological role, promotes motor nerve regeneration. May be involved in intracellular vesicle traffic. The protein is Beta-taxilin (Txlnb) of Mus musculus (Mouse).